Reading from the N-terminus, the 218-residue chain is Ribose-5-phosphate isomerase A (218 aa).

Substrate is bound by residues 27–30, 80–83, and 93–96; these read TGST, DGAD, and KGGG. Glutamate 102 serves as the catalytic Proton acceptor. Residue lysine 120 coordinates substrate.

The protein belongs to the ribose 5-phosphate isomerase family. Homodimer.

The enzyme catalyses aldehydo-D-ribose 5-phosphate = D-ribulose 5-phosphate. Its pathway is carbohydrate degradation; pentose phosphate pathway; D-ribose 5-phosphate from D-ribulose 5-phosphate (non-oxidative stage): step 1/1. Catalyzes the reversible conversion of ribose-5-phosphate to ribulose 5-phosphate. The sequence is that of Ribose-5-phosphate isomerase A from Thiobacillus denitrificans (strain ATCC 25259 / T1).